Reading from the N-terminus, the 1134-residue chain is MSTTKLTYSSGSSAKSKHSVRVAQTTADAKLHAVYEESGESGDSFDYSKSINATKSTGETIPAQAVTAYLQRMQRGGLVQPFGCMLAVEEGSFRVIAFSDNAGEMLDLMPQSVPSLGSGQQDVLTIGTDARTLFTAAASALEKAAGAVDLSMLNPIWVQSKTSAKPFYAIVHRIDVGLVMDLEPVKASDTRVGSAAGALQSHKLAAKAISRLQSLPGGDIGLLCDTVVEEVRDVTGYDLVMAYKFHEDEHGEVVAEIRRSDLEPYLGLHYPATDIPQASRFLFMKNRVRMICDCSAPPVKITQDKELRQPISLAGSTLRAPHGCHAQYMGNMGSVASLVMAMIINDNDEPSGGGGGGGQHKGRRLWGLVVCHHTSPRSVPFLRSACEFLMQVFGLQLNMEAAVAAHVREKHILRTQTLLCDMLLRDAPIGIVSQSPNIMDLVKCDGAALYYGKRFWLLGITPSEAQIKDIAEWLLEHHKDSTGLSTDSLADAGYPGAASLGDEVCGMAAAKITAKDFLFWFRSHTAKEVKWGGAKHDPDDKDDGRKMHPRSSFKAFLEVVKRRSLPWEDVEMDAIHSLQLILRGSFQDIDDSDTKTMIHARLNDLKLQGMDELSTVANEMVRLIETATAPILAVDSSGFINGWNAKVADVTGLPVTEAMGRSLAKELVLHESADMVERLLYLALQGDEEQNVELKLKTFGGQKDKEAVILVVNACASRDVSDNVVGVCFVGQDVTGQKVVMDKFTRIQGDYKAIVQNPNPLIPPIFGADEFGYCSEWNPAMEKLSGWRREEVLGKMLVGEIFGIQMMYCRLKGQDAVTKFMIVLNSAADGQDTEKFPFAFFDRQGKYVEALLTATKRADAEGSITGVFCFLHIASAELQQALTVQRATEKVALSKLKELAYIRQEIKNPLYGIMFTRTLMETTDLSEDQKQYVETGAVCEKQIRKILDDMDLESIEDGYLELDTTEFMMGTVMDAVISQGMITSKEKNLQLIRETPKEIKAMFLYGDQVRLQQVLADFLLNAIRFTPSSENWVGIKVATSRKRLGGVVHVMHLEFRITHPGVGLPEELVQEMFDRGRGMTQEGLGLSMCRKLVKLMNGEVEYIREAGKNYFLVSLELPLAQRDDAGSVKFQASS.

In terms of domain architecture, GAF spans 219 to 401; that stretch reads DIGLLCDTVV…VFGLQLNMEA (183 aa). Cys-324 serves as a coordination point for phytochromobilin. In terms of domain architecture, PAS 1 spans 616–687; the sequence is VANEMVRLIE…RLLYLALQGD (72 aa). The PAC domain maps to 690–746; the sequence is QNVELKLKTFGGQKDKEAVILVVNACASRDVSDNVVGVCFVGQDVTGQKVVMDKFTR. A PAS 2 domain is found at 750–821; it reads DYKAIVQNPN…KGQDAVTKFM (72 aa). The Histidine kinase domain maps to 901–1121; that stretch reads YIRQEIKNPL…LVSLELPLAQ (221 aa).

The protein belongs to the phytochrome family. Homodimer. Post-translationally, contains one covalently linked phytochromobilin chromophore.

Functionally, regulatory photoreceptor which exists in two forms that are reversibly interconvertible by light: the Pr form that absorbs maximally in the red region of the spectrum and the Pfr form that absorbs maximally in the far-red region. Photoconversion of Pr to Pfr induces an array of morphogenic responses, whereas reconversion of Pfr to Pr cancels the induction of those responses. Pfr controls the expression of a number of nuclear genes including those encoding the small subunit of ribulose-bisphosphate carboxylase, chlorophyll A/B binding protein, protochlorophyllide reductase, rRNA, etc. It also controls the expression of its own gene(s) in a negative feedback fashion. The sequence is that of Phytochrome 1 (PHY1) from Selaginella martensii (Martens's spike moss).